A 196-amino-acid chain; its full sequence is Probable malonic semialdehyde reductase RutE (196 aa).

Belongs to the nitroreductase family. HadB/RutE subfamily. It depends on FMN as a cofactor.

It carries out the reaction 3-hydroxypropanoate + NADP(+) = 3-oxopropanoate + NADPH + H(+). In terms of biological role, may reduce toxic product malonic semialdehyde to 3-hydroxypropionic acid, which is excreted. The polypeptide is Probable malonic semialdehyde reductase RutE (Shigella flexneri serotype 5b (strain 8401)).